Here is a 175-residue protein sequence, read N- to C-terminus: Ribosome maturation factor RimP (175 aa).

Positions 152 to 175 are disordered; the sequence is EFNRPTDGPGDDGDDGGDDEAGEA. Over residues 160–175 the composition is skewed to acidic residues; that stretch reads PGDDGDDGGDDEAGEA.

The protein belongs to the RimP family.

The protein resides in the cytoplasm. Functionally, required for maturation of 30S ribosomal subunits. This is Ribosome maturation factor RimP from Nocardioides sp. (strain ATCC BAA-499 / JS614).